A 147-amino-acid chain; its full sequence is Putative acetyltransferase BSU40680 (147 aa).

One can recognise an N-acetyltransferase domain in the interval 1-144; it reads MNVKKITSEQ…PHVLMTKQDD (144 aa). CoA-binding positions include 74 to 76 and 115 to 117; these read ICI and GFY.

It belongs to the UPF0039 (ElaA) family.

Could catalyze the transfer of an acetyl group from acetyl coenzyme A (AcCoA) to an acceptor substrate and release both CoA and the acetylated product. This Bacillus subtilis (strain 168) protein is Putative acetyltransferase BSU40680 (yybD).